The chain runs to 157 residues: S-ribosylhomocysteine lyase (157 aa).

Fe cation is bound by residues H54, H58, and C124.

It belongs to the LuxS family. In terms of assembly, homodimer. Requires Fe cation as cofactor.

The enzyme catalyses S-(5-deoxy-D-ribos-5-yl)-L-homocysteine = (S)-4,5-dihydroxypentane-2,3-dione + L-homocysteine. Involved in the synthesis of autoinducer 2 (AI-2) which is secreted by bacteria and is used to communicate both the cell density and the metabolic potential of the environment. The regulation of gene expression in response to changes in cell density is called quorum sensing. Catalyzes the transformation of S-ribosylhomocysteine (RHC) to homocysteine (HC) and 4,5-dihydroxy-2,3-pentadione (DPD). This is S-ribosylhomocysteine lyase from Levilactobacillus brevis (strain ATCC 367 / BCRC 12310 / CIP 105137 / JCM 1170 / LMG 11437 / NCIMB 947 / NCTC 947) (Lactobacillus brevis).